The sequence spans 105 residues: Replication restart protein PriB (105 aa).

Residues 1-102 enclose the SSB domain; the sequence is MTANRLVLTG…LHAEQIELID (102 aa).

Belongs to the PriB family. Homodimer. Interacts with PriA and DnaT. Component of the replication restart primosome. Primosome assembly occurs via a 'hand-off' mechanism. PriA binds to replication forks, subsequently PriB then DnaT bind; DnaT then displaces ssDNA to generate the helicase loading substrate.

In terms of biological role, involved in the restart of stalled replication forks, which reloads the replicative helicase on sites other than the origin of replication; the PriA-PriB pathway is the major replication restart pathway. During primosome assembly it facilitates complex formation between PriA and DnaT on DNA; stabilizes PriA on DNA. Stimulates the DNA unwinding activity of PriA helicase. This Proteus mirabilis (strain HI4320) protein is Replication restart protein PriB.